The primary structure comprises 375 residues: CLIP domain-containing serine protease B14 (375 aa).

Positions 1–24 (MYSRRYVACGLLCLLVIAIDQGHG) are cleaved as a signal peptide. The Clip domain maps to 29–83 (PCTTPNGTAGRCVRVRECGYVLDLLRKDLFAHSDTVHLEGLQCGTRPDGGALVCC). Intrachain disulfides connect cysteine 30/cysteine 82, cysteine 40/cysteine 71, and cysteine 46/cysteine 83. Residue asparagine 34 is glycosylated (N-linked (GlcNAc...) asparagine). The 270-residue stretch at 101 to 370 (IIGGNDTELG…YMGWLEREMF (270 aa)) folds into the Peptidase S1 domain. Residue asparagine 105 is glycosylated (N-linked (GlcNAc...) asparagine). Cysteine 131 and cysteine 147 are disulfide-bonded. Residues histidine 146 and aspartate 213 each act as charge relay system in the active site. Asparagine 238 carries N-linked (GlcNAc...) asparagine glycosylation. Intrachain disulfides connect cysteine 289/cysteine 307 and cysteine 317/cysteine 346. Serine 321 functions as the Charge relay system in the catalytic mechanism. The N-linked (GlcNAc...) asparagine glycan is linked to asparagine 357.

The protein belongs to the peptidase S1 family. CLIP subfamily. Post-translationally, N-glycosylated. In terms of processing, proteolytically cleaved. In terms of tissue distribution, expressed by a subpopulation of hemocytes.

The protein localises to the secreted. Its function is as follows. Serine protease. Plays a role in innate immunity against infections by parasite P.berghei and by Gram-negative bacteria such as E.coli. In response to P.berghei infection, contributes to the clearing of parasite ookinetes independent of melanization, an innate immune response which consists in the deposition of melanin pigments on invading pathogens and parasites. May play a role in non-septic wound healing. This chain is CLIP domain-containing serine protease B14, found in Anopheles gambiae (African malaria mosquito).